Here is a 578-residue protein sequence, read N- to C-terminus: Dystrotelin (578 aa).

A ZZ-type zinc finger spans residues 223–279 (THPARCTLCRTFPITGLRYRCLKCLNFDICQMCFLSGLHSKSHQKSHPVIEHCIQMS). The Zn(2+) site is built by C228, C231, C243, C246, C252, C255, H265, and H269. Positions 322-351 (HHAQARLLKKQLNQYKDKLQAIYTSQEERI) form a coiled coil. The segment at 382-475 (RLQPPGPSSS…QSQTQKMPQK (94 aa)) is disordered. Composition is skewed to basic and acidic residues over residues 399 to 410 (KVDHSSTEKVPK) and 431 to 451 (PKLD…HALR). Residues 455 to 472 (SPETTLHSTRAQSQTQKM) are compositionally biased toward polar residues. The stretch at 503-537 (ALAAVEKKEAGNIKERKDELEEEELQELLSKLMDA) forms a coiled coil.

The protein localises to the cell membrane. The polypeptide is Dystrotelin (DYTN) (Homo sapiens (Human)).